Here is a 239-residue protein sequence, read N- to C-terminus: Purine nucleoside phosphorylase DeoD-type (239 aa).

His-5 lines the a purine D-ribonucleoside pocket. Phosphate-binding positions include Gly-21, Arg-25, Arg-44, and 88–91; that span reads RVGS. Residues 180–182 and 204–205 contribute to the a purine D-ribonucleoside site; these read EME and SD. Asp-205 acts as the Proton donor in catalysis.

It belongs to the PNP/UDP phosphorylase family. Homohexamer; trimer of homodimers.

It catalyses the reaction a purine D-ribonucleoside + phosphate = a purine nucleobase + alpha-D-ribose 1-phosphate. The enzyme catalyses a purine 2'-deoxy-D-ribonucleoside + phosphate = a purine nucleobase + 2-deoxy-alpha-D-ribose 1-phosphate. In terms of biological role, catalyzes the reversible phosphorolytic breakdown of the N-glycosidic bond in the beta-(deoxy)ribonucleoside molecules, with the formation of the corresponding free purine bases and pentose-1-phosphate. The sequence is that of Purine nucleoside phosphorylase DeoD-type from Yersinia pseudotuberculosis serotype O:1b (strain IP 31758).